The primary structure comprises 695 residues: Elongation factor G 1 (695 aa).

Residues 6 to 284 (KKVRNIGISA…VTRYLPCPAD (279 aa)) form the tr-type G domain. GTP-binding positions include 15–22 (AHIDSGKT), 82–86 (DTPGH), and 136–139 (NKCD).

Belongs to the TRAFAC class translation factor GTPase superfamily. Classic translation factor GTPase family. EF-G/EF-2 subfamily.

The protein resides in the cytoplasm. Catalyzes the GTP-dependent ribosomal translocation step during translation elongation. During this step, the ribosome changes from the pre-translocational (PRE) to the post-translocational (POST) state as the newly formed A-site-bound peptidyl-tRNA and P-site-bound deacylated tRNA move to the P and E sites, respectively. Catalyzes the coordinated movement of the two tRNA molecules, the mRNA and conformational changes in the ribosome. The sequence is that of Elongation factor G 1 from Syntrophus aciditrophicus (strain SB).